Reading from the N-terminus, the 242-residue chain is Probable 2-phosphosulfolactate phosphatase (242 aa).

The protein belongs to the ComB family. Requires Mg(2+) as cofactor.

The catalysed reaction is (2R)-O-phospho-3-sulfolactate + H2O = (2R)-3-sulfolactate + phosphate. The chain is Probable 2-phosphosulfolactate phosphatase from Parasynechococcus marenigrum (strain WH8102).